Consider the following 607-residue polypeptide: Elongation factor 4 (607 aa).

One can recognise a tr-type G domain in the interval 11–193 (SKIRNFSIIA…QIVEKVPAPT (183 aa)). Residues 23-28 (DHGKST) and 140-143 (NKID) each bind GTP.

Belongs to the TRAFAC class translation factor GTPase superfamily. Classic translation factor GTPase family. LepA subfamily.

It is found in the cell membrane. The enzyme catalyses GTP + H2O = GDP + phosphate + H(+). Its function is as follows. Required for accurate and efficient protein synthesis under certain stress conditions. May act as a fidelity factor of the translation reaction, by catalyzing a one-codon backward translocation of tRNAs on improperly translocated ribosomes. Back-translocation proceeds from a post-translocation (POST) complex to a pre-translocation (PRE) complex, thus giving elongation factor G a second chance to translocate the tRNAs correctly. Binds to ribosomes in a GTP-dependent manner. This Bacillus cereus (strain AH820) protein is Elongation factor 4.